The primary structure comprises 550 residues: Calcium-dependent protein kinase 20 (550 aa).

Residues 1–58 (MGNCCVTPEGSGRGRKKQQQEQKQKQKEPKQQQQQQKKGKKPNPFSIEYNRSSAPSGH) form a disordered region. The N-myristoyl glycine moiety is linked to residue G2. Residues 18–30 (QQQEQKQKQKEPK) show a composition bias toward basic and acidic residues. Positions 75-333 (YELGGELGRG…AQQVLDHPWL (259 aa)) constitute a Protein kinase domain. Residues 81 to 89 (LGRGEFGVT) and K104 contribute to the ATP site. The Proton acceptor role is filled by D199. Residues 339–369 (APNVNLGETVKARLQQFSVMNKFKKHALRVI) form an autoinhibitory domain region. EF-hand domains are found at residues 376–411 (EEVAGIKDMFEKMDLNKDNMINFDELKLGLHKLGHQ), 412–447 (MADADVQILMDAADVDGNGSLDYGEFVALSVHLRKI), 448–483 (GNDEHLHKAFAYFDRNQSGYIEIDELRESLADDLGA), and 484–519 (NHEEVINAIIRDVDTDKDGKISYDEFAAMMKAGTDW). D389, N391, D393, M395, E400, D425, D427, N429, S431, E436, D461, N463, S465, Y467, E472, D497, D499, D501, K503, and E508 together coordinate Ca(2+).

This sequence belongs to the protein kinase superfamily. Ser/Thr protein kinase family. CDPK subfamily. In terms of tissue distribution, expressed in roots and leaf blades.

The protein resides in the membrane. The enzyme catalyses L-seryl-[protein] + ATP = O-phospho-L-seryl-[protein] + ADP + H(+). The catalysed reaction is L-threonyl-[protein] + ATP = O-phospho-L-threonyl-[protein] + ADP + H(+). With respect to regulation, activated by calcium. Autophosphorylation may play an important role in the regulation of the kinase activity. May play a role in signal transduction pathways that involve calcium as a second messenger. The chain is Calcium-dependent protein kinase 20 from Oryza sativa subsp. japonica (Rice).